A 90-amino-acid chain; its full sequence is U7-theraphotoxin-Hhn1a 1 (90 aa).

An N-terminal signal peptide occupies residues methionine 1–serine 19. Positions phenylalanine 20–glutamate 50 are excised as a propeptide. Cystine bridges form between cysteine 51/cysteine 65, cysteine 58/cysteine 70, and cysteine 64/cysteine 81.

It belongs to the neurotoxin 10 (Hwtx-1) family. 13 (Hntx-13) subfamily. Expressed by the venom gland.

It localises to the secreted. Ion channel inhibitor. In Cyriopagopus hainanus (Chinese bird spider), this protein is U7-theraphotoxin-Hhn1a 1.